The following is a 340-amino-acid chain: Organic solute transporter subunit alpha (340 aa).

Over Met-1 to Pro-48 the chain is Extracellular. A helical membrane pass occupies residues Val-49–Leu-69. Topologically, residues Glu-70–Thr-87 are cytoplasmic. The helical transmembrane segment at Leu-88–Ile-108 threads the bilayer. The Extracellular portion of the chain corresponds to Pro-109–Thr-118. Residues Ile-119–Gly-139 form a helical membrane-spanning segment. Over Gly-140–Met-181 the chain is Cytoplasmic. Residues Leu-182–Val-202 form a helical membrane-spanning segment. The Extracellular segment spans residues Pro-203–Ala-218. Residues Leu-219–Ile-239 traverse the membrane as a helical segment. Residues Ser-240–Lys-255 are Cytoplasmic-facing. A helical membrane pass occupies residues Phe-256–Leu-276. The Extracellular portion of the chain corresponds to Ala-277–Ser-294. Residues Gln-295–Tyr-317 traverse the membrane as a helical segment. Residues Arg-318–Ala-340 are Cytoplasmic-facing. Ser-330 is subject to Phosphoserine.

Belongs to the OST-alpha family. In terms of assembly, interacts with SLC51B. The Ost-alpha/Ost-beta complex is a heterodimer composed of alpha (SLC51A) and beta (SLC51B) subunit. As to expression, widely expressed with a high expression in ileum. Expressed in testis, colon, liver, small intestine, kidney, ovary and adrenal gland; and at low levels in heart, lung, brain, pituitary, thyroid gland, uterus, prostate, mammary gland and fat.

It is found in the cell membrane. It localises to the endoplasmic reticulum membrane. The catalysed reaction is taurocholate(out) = taurocholate(in). It carries out the reaction estrone 3-sulfate(out) = estrone 3-sulfate(in). It catalyses the reaction dehydroepiandrosterone 3-sulfate(out) = dehydroepiandrosterone 3-sulfate(in). The enzyme catalyses tauroursodeoxycholate(out) = tauroursodeoxycholate(in). The catalysed reaction is glycoursodeoxycholate(out) = glycoursodeoxycholate(in). It carries out the reaction glycocholate(out) = glycocholate(in). It catalyses the reaction taurochenodeoxycholate(out) = taurochenodeoxycholate(in). The enzyme catalyses glycochenodeoxycholate(out) = glycochenodeoxycholate(in). The catalysed reaction is taurodeoxycholate(out) = taurodeoxycholate(in). It carries out the reaction glycodeoxycholate(out) = glycodeoxycholate(in). It catalyses the reaction prostaglandin E2(out) = prostaglandin E2(in). Its function is as follows. Essential component of the Ost-alpha/Ost-beta complex, a heterodimer that acts as the intestinal basolateral transporter responsible for bile acid export from enterocytes into portal blood. Efficiently transports the major species of bile acids (taurocholate). Taurine conjugates are transported more efficiently across the basolateral membrane than glycine-conjugated bile acids. Can also transport steroids such as estrone 3-sulfate and dehydroepiandrosterone 3-sulfate, therefore playing a role in the enterohepatic circulation of sterols. Able to transport eicosanoids such as prostaglandin E2. The chain is Organic solute transporter subunit alpha (SLC51A) from Homo sapiens (Human).